Here is a 311-residue protein sequence, read N- to C-terminus: Homoserine kinase (311 aa).

89 to 99 (PFARGLGSSAT) is a binding site for ATP.

Belongs to the GHMP kinase family. Homoserine kinase subfamily.

The protein resides in the cytoplasm. It catalyses the reaction L-homoserine + ATP = O-phospho-L-homoserine + ADP + H(+). The protein operates within amino-acid biosynthesis; L-threonine biosynthesis; L-threonine from L-aspartate: step 4/5. Catalyzes the ATP-dependent phosphorylation of L-homoserine to L-homoserine phosphate. The chain is Homoserine kinase from Halothermothrix orenii (strain H 168 / OCM 544 / DSM 9562).